We begin with the raw amino-acid sequence, 192 residues long: Ribosome maturation factor RimP (192 aa).

This sequence belongs to the RimP family.

The protein resides in the cytoplasm. Required for maturation of 30S ribosomal subunits. In Delftia acidovorans (strain DSM 14801 / SPH-1), this protein is Ribosome maturation factor RimP.